Here is a 267-residue protein sequence, read N- to C-terminus: Cell division protein FtsQ (267 aa).

Residues 1–32 (MRKKTSSNKKKQTKKTNNISLRRKLGLMYKKA) lie on the Cytoplasmic side of the membrane. Residues 33-53 (ILGLKIALIIFVCLFVFTKYF) traverse the membrane as a helical segment. Residues 54–267 (AGIKTYLTTN…DKNKYYIEKY (214 aa)) are Periplasmic-facing. In terms of domain architecture, POTRA spans 73–141 (FKLENVIIEG…NTVYIKLFER (69 aa)).

Belongs to the FtsQ/DivIB family. FtsQ subfamily.

It is found in the cell inner membrane. In terms of biological role, essential cell division protein. This chain is Cell division protein FtsQ, found in Rickettsia conorii (strain ATCC VR-613 / Malish 7).